Consider the following 236-residue polypeptide: Small ribosomal subunit protein uS2c (236 aa).

Belongs to the universal ribosomal protein uS2 family.

The protein resides in the plastid. Its subcellular location is the chloroplast. The sequence is that of Small ribosomal subunit protein uS2c (rps2) from Triticum aestivum (Wheat).